Here is a 190-residue protein sequence, read N- to C-terminus: Thiamine biosynthesis protein X (190 aa).

The first 22 residues, 1-22 (MSISRTVFGIAATAALSAALVA), serve as a signal peptide directing secretion. A lipid anchor (N-palmitoyl cysteine) is attached at cysteine 23. A lipid anchor (S-diacylglycerol cysteine) is attached at cysteine 23. A disordered region spans residues 43–68 (SQNPTSASSTSTSSATTTSSAPVEED). The span at 47–63 (TSASSTSTSSATTTSSA) shows a compositional bias: low complexity.

The protein resides in the cell membrane. Its function is as follows. Is necessary for biosynthesis of the 4-methyl-5-(beta-hydroxyethyl)thiazol component from which thiamine is formed. This is Thiamine biosynthesis protein X (thiX) from Corynebacterium glutamicum (strain ATCC 13032 / DSM 20300 / JCM 1318 / BCRC 11384 / CCUG 27702 / LMG 3730 / NBRC 12168 / NCIMB 10025 / NRRL B-2784 / 534).